A 138-amino-acid chain; its full sequence is Large ribosomal subunit protein uL16 (138 aa).

Over residues 1–17 (MLIPRKVKHRKQHHPRQ) the composition is skewed to basic residues. The interval 1–23 (MLIPRKVKHRKQHHPRQRGIASG) is disordered.

The protein belongs to the universal ribosomal protein uL16 family. In terms of assembly, part of the 50S ribosomal subunit.

Functionally, binds 23S rRNA and is also seen to make contacts with the A and possibly P site tRNAs. This Mycobacterium sp. (strain JLS) protein is Large ribosomal subunit protein uL16.